Reading from the N-terminus, the 500-residue chain is Phenylalanine--tRNA ligase alpha subunit (500 aa).

Residues threonine 343, 382–384 (QVD), and phenylalanine 423 each bind L-phenylalanine. Residue glutamate 425 coordinates Mg(2+). Phenylalanine 448 contacts L-phenylalanine.

It belongs to the class-II aminoacyl-tRNA synthetase family. Phe-tRNA synthetase alpha subunit type 2 subfamily. Tetramer of two alpha and two beta subunits. Requires Mg(2+) as cofactor.

It is found in the cytoplasm. The enzyme catalyses tRNA(Phe) + L-phenylalanine + ATP = L-phenylalanyl-tRNA(Phe) + AMP + diphosphate + H(+). This is Phenylalanine--tRNA ligase alpha subunit from Thermococcus onnurineus (strain NA1).